A 476-amino-acid polypeptide reads, in one-letter code: Bifunctional protein HldE (476 aa).

Residues 1-318 (MFQYSAEFKQ…ENAIHGRSNT (318 aa)) are ribokinase. Position 195 to 198 (195 to 198 (NMSE)) interacts with ATP. Aspartate 264 is an active-site residue. Positions 344–476 (MTNGCFDILH…VISKIQQLKD (133 aa)) are cytidylyltransferase.

In the N-terminal section; belongs to the carbohydrate kinase PfkB family. This sequence in the C-terminal section; belongs to the cytidylyltransferase family. In terms of assembly, homodimer.

It carries out the reaction D-glycero-beta-D-manno-heptose 7-phosphate + ATP = D-glycero-beta-D-manno-heptose 1,7-bisphosphate + ADP + H(+). The catalysed reaction is D-glycero-beta-D-manno-heptose 1-phosphate + ATP + H(+) = ADP-D-glycero-beta-D-manno-heptose + diphosphate. It participates in nucleotide-sugar biosynthesis; ADP-L-glycero-beta-D-manno-heptose biosynthesis; ADP-L-glycero-beta-D-manno-heptose from D-glycero-beta-D-manno-heptose 7-phosphate: step 1/4. It functions in the pathway nucleotide-sugar biosynthesis; ADP-L-glycero-beta-D-manno-heptose biosynthesis; ADP-L-glycero-beta-D-manno-heptose from D-glycero-beta-D-manno-heptose 7-phosphate: step 3/4. Its pathway is bacterial outer membrane biogenesis; LPS core biosynthesis. In terms of biological role, catalyzes the phosphorylation of D-glycero-D-manno-heptose 7-phosphate at the C-1 position to selectively form D-glycero-beta-D-manno-heptose-1,7-bisphosphate. Its function is as follows. Catalyzes the ADP transfer from ATP to D-glycero-beta-D-manno-heptose 1-phosphate, yielding ADP-D-glycero-beta-D-manno-heptose. This is Bifunctional protein HldE from Pasteurella multocida (strain Pm70).